The chain runs to 87 residues: Small ribosomal subunit protein uS17 (87 aa).

It belongs to the universal ribosomal protein uS17 family. As to quaternary structure, part of the 30S ribosomal subunit.

In terms of biological role, one of the primary rRNA binding proteins, it binds specifically to the 5'-end of 16S ribosomal RNA. The polypeptide is Small ribosomal subunit protein uS17 (Bacillus mycoides (strain KBAB4) (Bacillus weihenstephanensis)).